Consider the following 274-residue polypeptide: Putative bidirectional sugar transporter SWEET7d (274 aa).

The Extracellular portion of the chain corresponds to 1 to 8 (MVPDLIRN). Residues 9 to 29 (VVGIVGNVISFGLFLSPVPTF) traverse the membrane as a helical segment. Positions 9–96 (VVGIVGNVIS…TIFFLFSDKK (88 aa)) constitute a MtN3/slv 1 domain. The Cytoplasmic portion of the chain corresponds to 30-45 (WRIIKNKDVRDFKADQ). The helical transmembrane segment at 46–66 (YLATLLNCMLWVFYGLPIVHP) threads the bilayer. Topologically, residues 67–68 (NS) are extracellular. Residues 69–89 (ILVVTINGIGLVIEAVYLTIF) traverse the membrane as a helical segment. Residues 90-100 (FLFSDKKNKKK) are Cytoplasmic-facing. The chain crosses the membrane as a helical span at residues 101–121 (MGVVLATEALFMAAVALGVLL). The Extracellular portion of the chain corresponds to 122–130 (DAHTHQRRS). Residues 131–151 (LIVGILCVIFGTIMYSSPLTI) form a helical membrane-spanning segment. A MtN3/slv 2 domain is found at 132 to 214 (IVGILCVIFG…QLILYAIYYR (83 aa)). At 152–164 (MSQVVKTKSVEYM) the chain is on the cytoplasmic side. A helical transmembrane segment spans residues 165 to 185 (PLLLSVVSFLNGLCWTSYALI). At 186 to 188 (RFD) the chain is on the extracellular side. The helical transmembrane segment at 189 to 209 (IFITIPNGLGVLFALMQLILY) threads the bilayer. At 210–274 (AIYYRTTPKK…SISRLSHKLA (65 aa)) the chain is on the cytoplasmic side. A disordered region spans residues 218–274 (KKPSTTGPHPRSRIRTSSYQPSPPSPRAPASSPLSARTTTSMAAMSPSISRLSHKLA). A compositionally biased stretch (low complexity) spans 245–258 (APASSPLSARTTTS).

This sequence belongs to the SWEET sugar transporter family. In terms of assembly, forms homooligomers and/or heterooligomers.

It is found in the cell membrane. In terms of biological role, mediates both low-affinity uptake and efflux of sugar across the plasma membrane. In Oryza sativa subsp. japonica (Rice), this protein is Putative bidirectional sugar transporter SWEET7d (SWEET7D).